We begin with the raw amino-acid sequence, 823 residues long: Kinesin-like protein KIN-7N (823 aa).

In terms of domain architecture, Kinesin motor spans Lys3–Ile325. Residue Gly83–Thr90 participates in ATP binding. Coiled coils occupy residues Leu341–Asn414, Arg527–Gln557, and Glu696–Glu786.

Belongs to the TRAFAC class myosin-kinesin ATPase superfamily. Kinesin family. KIN-7 subfamily.

This is Kinesin-like protein KIN-7N from Arabidopsis thaliana (Mouse-ear cress).